Consider the following 234-residue polypeptide: Probable transcriptional regulatory protein PSPPH_2212 (234 aa).

This sequence belongs to the TACO1 family.

The protein localises to the cytoplasm. This Pseudomonas savastanoi pv. phaseolicola (strain 1448A / Race 6) (Pseudomonas syringae pv. phaseolicola (strain 1448A / Race 6)) protein is Probable transcriptional regulatory protein PSPPH_2212.